A 518-amino-acid polypeptide reads, in one-letter code: MMMTKQKPTLTERLNIGGDEVRELKLGATFNPKNTATAFHTIKYDFKPASVDTSRMATVDVGSNNQVTVTVPNLESSGVPQTVYKGNHKKYTKECLIIFDKETGAITLEKLNHNIQVKKTRSEMTNKPSLMPATNAAPMSSGPNGVPMPSGAMAGTGSGPKLENSTMRITSKTKVSTGSRRNNIIDFKPRNSPMQQSSPSRPVASHRSPQSAPAWHANNAQQTLPSIPMIMDDDDFGLSAALHNGGGGGGGQANISGSSTGSSVGQPDYGSVNMGKQRQASSQGHAKRQQQTQRSSPPMQQQQQQQNYGRGGANNNYAQQLHQQQQQQQQQQLQQQQQQMQQRASFSHSNHSNSMPLDLDSPTHHEQAAQSMAQAAAVLEQQIGGELSASSSSSESESSDSDSGSDSDDSTEDDRSTHQQQQPPGQLSQHHHHHMQQQQHMHQLPNLGLGSISPTYNSHQHHQQQQQQHQQQQQQQSHHHHHQQQQQQSSIYASNGGFPNDLLQNDLQLSSNSSDDDD.

2 stretches are compositionally biased toward polar residues: residues K119–P128 and E163–N182. Disordered regions lie at residues K119–H216 and A241–D518. At S192 the chain carries Phosphoserine. Composition is skewed to polar residues over residues A253–G265 and M274–G284. A compositionally biased stretch (low complexity) spans Q289 to Q342. The span at R343 to M355 shows a compositional bias: polar residues. Low complexity predominate over residues A368–A377. A compositionally biased stretch (acidic residues) spans E397–E412. Composition is skewed to low complexity over residues H418–S428, Q463–Q476, and N500–D518.

It belongs to the EAF family.

It localises to the nucleus. Functionally, promotes transcriptional elongation by Su(Tpl)/ELL. Essential for development. The sequence is that of Ell-associated factor Eaf from Drosophila mojavensis (Fruit fly).